The chain runs to 471 residues: L-amino acid dehydrogenase (471 aa).

G31 provides a ligand contact to Mg(2+). Position 33 (S33) interacts with FAD. G34 is a binding site for Mg(2+). 3 residues coordinate FAD: E52, R60, and V256. A283 contributes to the Mg(2+) binding site. F453 provides a ligand contact to FAD.

The protein belongs to the flavin monoamine oxidase family. It depends on FAD as a cofactor. Requires Mg(2+) as cofactor.

The protein resides in the cellular thylakoid membrane. The catalysed reaction is a plastoquinone + an L-alpha-amino acid + H2O = a plastoquinol + a 2-oxocarboxylate + NH4(+). The enzyme catalyses a plastoquinone + L-arginine + H2O = a plastoquinol + 5-guanidino-2-oxopentanoate + NH4(+). Its pathway is amino-acid degradation; L-arginine degradation. Its activity is regulated as follows. Inhibited by Ca(2+) and other cations such as Ni(2+), Co(2+) and Zn(2+). The inhibition by o-phenanthroline and salicylhydroxamic acid suggests the presence of a metal cofactor besides FAD in the enzyme. The L-arginine-stimulated O(2) consumption involving slr0782 is inhibited by inhibitors of the respiratory electron transport chain, such as KCN and 2,5-dibromo-3-methyl-6-isopropyl-p-benzoquinone, which indicates a participation of the cytochrome b6/f complex and of a cytochrome oxidase. L-amino acid dehydrogenase with broad substrate specificity. Catalyzes the oxidative deamination of various L-amino acids, L-Arg and L-Cys being the best substrates in vitro. Likely functions mainly as an L-arginine dehydrogenase in vivo. Probably feeds electrons from L-arginine oxidation and also from the oxidation of other L-amino acids into the respiratory electron transport chain associated to the thylakoid membrane, and does not directly interact with molecular oxygen but donates electrons to the plastoquinone pool. Cannot use D-amino acids as substrates. In Synechocystis sp. (strain ATCC 27184 / PCC 6803 / Kazusa), this protein is L-amino acid dehydrogenase.